Here is a 276-residue protein sequence, read N- to C-terminus: 2-dehydro-3-deoxyphosphooctonate aldolase (276 aa).

The protein belongs to the KdsA family.

It localises to the cytoplasm. The enzyme catalyses D-arabinose 5-phosphate + phosphoenolpyruvate + H2O = 3-deoxy-alpha-D-manno-2-octulosonate-8-phosphate + phosphate. It functions in the pathway carbohydrate biosynthesis; 3-deoxy-D-manno-octulosonate biosynthesis; 3-deoxy-D-manno-octulosonate from D-ribulose 5-phosphate: step 2/3. The protein operates within bacterial outer membrane biogenesis; lipopolysaccharide biosynthesis. The polypeptide is 2-dehydro-3-deoxyphosphooctonate aldolase (Helicobacter pylori (strain Shi470)).